Here is a 176-residue protein sequence, read N- to C-terminus: Isopentenyl-diphosphate Delta-isomerase (176 aa).

Mn(2+)-binding residues include H22 and H28. A Nudix hydrolase domain is found at 26–160 (LRHKAVSVFV…PERYTPWLRI (135 aa)). Residue C62 is part of the active site. H64 is a binding site for Mn(2+). E82 lines the Mg(2+) pocket. The Mn(2+) site is built by E108 and E110. Residue E110 is part of the active site.

Belongs to the IPP isomerase type 1 family. Requires Mg(2+) as cofactor. Mn(2+) serves as cofactor.

The protein resides in the cytoplasm. The catalysed reaction is isopentenyl diphosphate = dimethylallyl diphosphate. It participates in isoprenoid biosynthesis; dimethylallyl diphosphate biosynthesis; dimethylallyl diphosphate from isopentenyl diphosphate: step 1/1. Its pathway is porphyrin-containing compound metabolism; chlorophyll biosynthesis. Catalyzes the 1,3-allylic rearrangement of the homoallylic substrate isopentenyl (IPP) to its highly electrophilic allylic isomer, dimethylallyl diphosphate (DMAPP). The sequence is that of Isopentenyl-diphosphate Delta-isomerase from Dinoroseobacter shibae (strain DSM 16493 / NCIMB 14021 / DFL 12).